The following is a 576-amino-acid chain: Proline--tRNA ligase (576 aa).

Belongs to the class-II aminoacyl-tRNA synthetase family. ProS type 1 subfamily. Homodimer.

Its subcellular location is the cytoplasm. The enzyme catalyses tRNA(Pro) + L-proline + ATP = L-prolyl-tRNA(Pro) + AMP + diphosphate. Its function is as follows. Catalyzes the attachment of proline to tRNA(Pro) in a two-step reaction: proline is first activated by ATP to form Pro-AMP and then transferred to the acceptor end of tRNA(Pro). As ProRS can inadvertently accommodate and process non-cognate amino acids such as alanine and cysteine, to avoid such errors it has two additional distinct editing activities against alanine. One activity is designated as 'pretransfer' editing and involves the tRNA(Pro)-independent hydrolysis of activated Ala-AMP. The other activity is designated 'posttransfer' editing and involves deacylation of mischarged Ala-tRNA(Pro). The misacylated Cys-tRNA(Pro) is not edited by ProRS. In Leptospira borgpetersenii serovar Hardjo-bovis (strain JB197), this protein is Proline--tRNA ligase.